The primary structure comprises 102 residues: Parathymosin (102 aa).

Residues 1–102 (MSEKSVEAAA…RQKTENGASA (102 aa)) are disordered. Ser-2 is subject to N-acetylserine. Phosphoserine is present on Ser-2. Lys-4 carries the N6-acetyllysine modification. Residues Ser-5 and Ser-13 each carry the phosphoserine modification. Residues 13 to 37 (SAKDLKEKKDKVEEKAGRKERKKEV) show a composition bias toward basic and acidic residues. Residue Lys-15 is modified to N6-acetyllysine. The segment covering 38–75 (VEEEENGAEEEEEETAEDGEDDDEGDEEDEEEEEEEDE) has biased composition (acidic residues). Position 52 is a phosphothreonine (Thr-52). Position 92 is an N6-acetyllysine (Lys-92).

It belongs to the pro/parathymosin family.

Parathymosin may mediate immune function by blocking the effect of prothymosin alpha which confers resistance to certain opportunistic infections. The polypeptide is Parathymosin (Ptms) (Rattus norvegicus (Rat)).